A 1239-amino-acid polypeptide reads, in one-letter code: DNA-directed RNA polymerase subunit beta (1239 aa).

A disordered region spans residues 1182–1239; that stretch reads IEGAENQLEDKEEKEEEKEENYKEDSDEYDDLREEDVEPDLEELSLDDLDLDDFGDEH. Acidic residues-rich tracts occupy residues 1191-1200 and 1206-1239; these read DKEEKEEEKE and DSDE…GDEH.

This sequence belongs to the RNA polymerase beta chain family. The RNAP catalytic core consists of 2 alpha, 1 beta, 1 beta' and 1 omega subunit. When a sigma factor is associated with the core the holoenzyme is formed, which can initiate transcription.

It catalyses the reaction RNA(n) + a ribonucleoside 5'-triphosphate = RNA(n+1) + diphosphate. DNA-dependent RNA polymerase catalyzes the transcription of DNA into RNA using the four ribonucleoside triphosphates as substrates. The protein is DNA-directed RNA polymerase subunit beta of Clostridium botulinum (strain Loch Maree / Type A3).